Here is a 462-residue protein sequence, read N- to C-terminus: ATP synthase subunit beta (462 aa).

ATP is bound at residue 151 to 158 (GGAGVGKT).

The protein belongs to the ATPase alpha/beta chains family. In terms of assembly, F-type ATPases have 2 components, CF(1) - the catalytic core - and CF(0) - the membrane proton channel. CF(1) has five subunits: alpha(3), beta(3), gamma(1), delta(1), epsilon(1). CF(0) has four main subunits: a(1), b(1), b'(1) and c(9-12).

Its subcellular location is the cell inner membrane. It carries out the reaction ATP + H2O + 4 H(+)(in) = ADP + phosphate + 5 H(+)(out). In terms of biological role, produces ATP from ADP in the presence of a proton gradient across the membrane. The catalytic sites are hosted primarily by the beta subunits. This is ATP synthase subunit beta from Chlorobium chlorochromatii (strain CaD3).